Consider the following 412-residue polypeptide: Glutamyl-tRNA reductase (412 aa).

Substrate-binding positions include 52–55, Ser108, 113–115, and Gln119; these read TCNR and EYE. The active-site Nucleophile is the Cys53. 189–194 contributes to the NADP(+) binding site; sequence GAGEIG.

This sequence belongs to the glutamyl-tRNA reductase family. As to quaternary structure, homodimer.

It carries out the reaction (S)-4-amino-5-oxopentanoate + tRNA(Glu) + NADP(+) = L-glutamyl-tRNA(Glu) + NADPH + H(+). The protein operates within porphyrin-containing compound metabolism; protoporphyrin-IX biosynthesis; 5-aminolevulinate from L-glutamyl-tRNA(Glu): step 1/2. Its function is as follows. Catalyzes the NADPH-dependent reduction of glutamyl-tRNA(Glu) to glutamate 1-semialdehyde (GSA). This is Glutamyl-tRNA reductase from Sulfurisphaera tokodaii (strain DSM 16993 / JCM 10545 / NBRC 100140 / 7) (Sulfolobus tokodaii).